The chain runs to 117 residues: Large ribosomal subunit protein bL19 (117 aa).

The protein belongs to the bacterial ribosomal protein bL19 family.

This protein is located at the 30S-50S ribosomal subunit interface and may play a role in the structure and function of the aminoacyl-tRNA binding site. In Alkaliphilus metalliredigens (strain QYMF), this protein is Large ribosomal subunit protein bL19.